Reading from the N-terminus, the 123-residue chain is Ribosome-binding factor A (123 aa).

This sequence belongs to the RbfA family. As to quaternary structure, monomer. Binds 30S ribosomal subunits, but not 50S ribosomal subunits or 70S ribosomes.

It localises to the cytoplasm. One of several proteins that assist in the late maturation steps of the functional core of the 30S ribosomal subunit. Associates with free 30S ribosomal subunits (but not with 30S subunits that are part of 70S ribosomes or polysomes). Required for efficient processing of 16S rRNA. May interact with the 5'-terminal helix region of 16S rRNA. In Legionella pneumophila (strain Paris), this protein is Ribosome-binding factor A.